Reading from the N-terminus, the 297-residue chain is UTP--glucose-1-phosphate uridylyltransferase (297 aa).

The protein belongs to the UDPGP type 2 family.

It carries out the reaction alpha-D-glucose 1-phosphate + UTP + H(+) = UDP-alpha-D-glucose + diphosphate. It functions in the pathway carbohydrate metabolism; nucleotide-sugar metabolism. Its pathway is bacterial outer membrane biogenesis; lipopolysaccharide biosynthesis. This is UTP--glucose-1-phosphate uridylyltransferase (galF) from Escherichia coli O157:H7.